The sequence spans 963 residues: Ubiquitin carboxyl-terminal hydrolase 4 (963 aa).

The 112-residue stretch at 11-122 (PDAETQKSEL…GQQPIVRKVV (112 aa)) folds into the DUSP domain. Residues 27 to 216 (TLQRGAQWYL…LYLGQVLVIE (190 aa)) form a necessary for interaction with SART3 region. The short motif at 133 to 141 (VEVYLLELK) is the Nuclear export signal element. One can recognise a Ubiquitin-like 1 domain in the interval 142–226 (LCENSDPTNV…PQNEDGTWPR (85 aa)). The tract at residues 220-255 (EDGTWPRQTLQSKSSTAPSRNFTTSPKSSASPYSSV) is disordered. Residues 225-243 (PRQTLQSKSSTAPSRNFTT) are compositionally biased toward polar residues. The required for USP4 activation by providing conformational flexibility between the DUSP and catalytic domains stretch occupies residues 229-295 (LQSKSSTAPS…SYNCQEPPSS (67 aa)). Over residues 244–255 (SPKSSASPYSSV) the composition is skewed to low complexity. Residues 302–923 (CGLGNLGNTC…AAYVLFYQRR (622 aa)) enclose the USP domain. Cys-311 (nucleophile) is an active-site residue. The interval 384-386 (PQF) is regulates ubiquitin dissociation. The segment at 405 to 407 (LHE) is necessary for interaction with RBL2. Ser-445 carries the phosphoserine modification. The tract at residues 459 to 463 (LVCPE) is necessary for interaction with RB1 and RBL2. Residues Cys-461 and Cys-464 each coordinate Zn(2+). A Ubiquitin-like 2 domain is found at 483 to 571 (LKKDRVMEVF…IFVYEVCSTS (89 aa)). Residues 485–775 (KDRVMEVFLV…LQPQKKKKTT (291 aa)) form an interacts with DUSP and ubiquitin-like 1 domains and is required for USP4 activation region. Residues 637 to 698 (DEFGSSPLEP…PSETTQKKIK (62 aa)) are disordered. Ser-655 is modified (phosphoserine). Residues 657–666 (EGEDEEEMEH) show a composition bias toward acidic residues. Phosphoserine is present on residues Ser-675 and Ser-680. Residues 767 to 772 (QPQKKK) carry the Nuclear localization signal motif. Zn(2+) is bound by residues Cys-799 and Cys-802. Residue His-881 is the Proton acceptor of the active site. The segment at 928–963 (YKTPSLSSSGSSDGGTRPSSSQQGLGDDEACSMDTN) is disordered. Residues 932–948 (SLSSSGSSDGGTRPSSS) show a composition bias toward low complexity. Residues 953–963 (GDDEACSMDTN) are compositionally biased toward acidic residues.

Belongs to the peptidase C19 family. USP4 subfamily. Interacts with RB1 (both dephosphorylated and hypophosphorylated forms). Interacts with RBL1 and RBL2. Interacts with ADORA2A (via cytoplasmic C-terminus); the interaction is direct. Interacts with SART3; recruits USP4 to its substrate PRPF3. In terms of processing, phosphorylated at Ser-445 by PKB/AKT1 in response to EGF stimulus, promoting its ability deubiquitinate RHEB. Monoubiquitinated by TRIM21. Ubiquitination does not lead to its proteasomal degradation. Autodeubiquitinated.

It localises to the cytoplasm. It is found in the nucleus. The enzyme catalyses Thiol-dependent hydrolysis of ester, thioester, amide, peptide and isopeptide bonds formed by the C-terminal Gly of ubiquitin (a 76-residue protein attached to proteins as an intracellular targeting signal).. The completion of the deubiquitinase reaction is mediated by the DUSP and ubiquitin-like 1 domains which promotes the release of ubiquitin from the catalytic site enabling subsequent reactions to occur. In terms of biological role, deubiquitinating enzyme that removes conjugated ubiquitin from target proteins. Deubiquitinates PDPK1. Deubiquitinates TRIM21. Deubiquitinates receptor ADORA2A which increases the amount of functional receptor at the cell surface. Deubiquitinates HAS2. Deubiquitinates RHEB in response to EGF signaling, promoting mTORC1 signaling. May regulate mRNA splicing through deubiquitination of the U4 spliceosomal protein PRPF3. This may prevent its recognition by the U5 component PRPF8 thereby destabilizing interactions within the U4/U6.U5 snRNP. May also play a role in the regulation of quality control in the ER. The polypeptide is Ubiquitin carboxyl-terminal hydrolase 4 (USP4) (Pongo abelii (Sumatran orangutan)).